The sequence spans 425 residues: F-box/LRR-repeat protein At3g59250 (425 aa).

Positions 6 to 54 constitute an F-box domain; it reads KDKISNLPEALICHILSFLPIEDSALTSVLSKRWRYLFAFRPNLVFDDS. LRR repeat units follow at residues 86 to 113, 138 to 163, 185 to 210, 264 to 293, and 294 to 319; these read DLQVNVNGVRLPSKVFVSKSLVRLRIES, MLGKGEDCFEKLTSGCHVLEELVLNN, CTESYDKNPHSVLFDTPNLVYLKYSD, CLSANSLAVLTFCCESIPVFNNLIQLTIKT, and NQSVGWESLPALLKNCPILETLVFEG.

The sequence is that of F-box/LRR-repeat protein At3g59250 from Arabidopsis thaliana (Mouse-ear cress).